Consider the following 154-residue polypeptide: Prefoldin subunit alpha (154 aa).

A compositionally biased stretch (polar residues) spans 92-102 (DNAVESLSTKQ). Positions 92–154 (DNAVESLSTK…MQDQQPEDNE (63 aa)) are disordered. Basic and acidic residues predominate over residues 103-114 (DALDNRIESLRD). Low complexity predominate over residues 128 to 148 (QQAQQMQQQMQQQQMQQMQDQ).

It belongs to the prefoldin subunit alpha family. In terms of assembly, heterohexamer of two alpha and four beta subunits.

Its subcellular location is the cytoplasm. Functionally, molecular chaperone capable of stabilizing a range of proteins. Seems to fulfill an ATP-independent, HSP70-like function in archaeal de novo protein folding. This chain is Prefoldin subunit alpha, found in Haloquadratum walsbyi (strain DSM 16790 / HBSQ001).